Here is a 330-residue protein sequence, read N- to C-terminus: Ribosomal RNA small subunit methyltransferase A (330 aa).

Positions 29, 31, 56, 77, and 98 each coordinate S-adenosyl-L-methionine. Positions 115 to 158 (PVRSAGLPQAETAPKGLEPAGSSSQQGPRDWLRQTAGAAAPSRG) are disordered. Asparagine 177 contributes to the S-adenosyl-L-methionine binding site.

The protein belongs to the class I-like SAM-binding methyltransferase superfamily. rRNA adenine N(6)-methyltransferase family. RsmA subfamily.

The protein resides in the cytoplasm. It carries out the reaction adenosine(1518)/adenosine(1519) in 16S rRNA + 4 S-adenosyl-L-methionine = N(6)-dimethyladenosine(1518)/N(6)-dimethyladenosine(1519) in 16S rRNA + 4 S-adenosyl-L-homocysteine + 4 H(+). Functionally, specifically dimethylates two adjacent adenosines (A1518 and A1519) in the loop of a conserved hairpin near the 3'-end of 16S rRNA in the 30S particle. May play a critical role in biogenesis of 30S subunits. This chain is Ribosomal RNA small subunit methyltransferase A, found in Polaromonas sp. (strain JS666 / ATCC BAA-500).